We begin with the raw amino-acid sequence, 85 residues long: Large ribosomal subunit protein bL27 (85 aa).

Residues 1-22 (MAHKKGVGSTRNGRDSESKRLG) are disordered.

The protein belongs to the bacterial ribosomal protein bL27 family.

The protein is Large ribosomal subunit protein bL27 of Geobacter metallireducens (strain ATCC 53774 / DSM 7210 / GS-15).